Consider the following 144-residue polypeptide: MKSARRRSRELATQGLYQWLLSGSPGGEIDAQLRGAQGFDKADHEHLDAVLHGVIRDSEALSAAIAPCLDRPIEQLSPVERAVLLVAAFELKNHLDIPYRVVINEAVELAKTFGGADGYKYVNGVLDKLSAQLREDETQAARKR.

The protein belongs to the NusB family.

Its function is as follows. Involved in transcription antitermination. Required for transcription of ribosomal RNA (rRNA) genes. Binds specifically to the boxA antiterminator sequence of the ribosomal RNA (rrn) operons. The protein is Transcription antitermination protein NusB of Paraburkholderia xenovorans (strain LB400).